Reading from the N-terminus, the 353-residue chain is Photosystem II D2 protein (353 aa).

Residue Thr-2 is modified to N-acetylthreonine. The residue at position 2 (Thr-2) is a Phosphothreonine. A helical membrane pass occupies residues 41–61; sequence CAYFALGGWFTGTTFVTSWYT. His-118 serves as a coordination point for chlorophyll a. The chain crosses the membrane as a helical span at residues 125–141; it reads GFMLRQFEIARSVQLRP. Pheophytin a contacts are provided by Gln-130 and Asn-143. The helical transmembrane segment at 153 to 166 threads the bilayer; it reads VFVSVFLIYPLGQS. Residue His-198 coordinates chlorophyll a. The helical transmembrane segment at 208 to 228 threads the bilayer; it reads AALLCAIHGATVENTLFEDGD. Residues His-215 and Phe-262 each coordinate a plastoquinone. A Fe cation-binding site is contributed by His-215. Residue His-269 coordinates Fe cation. The chain crosses the membrane as a helical span at residues 279 to 295; it reads GLWMSALGVVGLALNLR.

This sequence belongs to the reaction center PufL/M/PsbA/D family. As to quaternary structure, PSII is composed of 1 copy each of membrane proteins PsbA, PsbB, PsbC, PsbD, PsbE, PsbF, PsbH, PsbI, PsbJ, PsbK, PsbL, PsbM, PsbT, PsbX, PsbY, PsbZ, Psb30/Ycf12, at least 3 peripheral proteins of the oxygen-evolving complex and a large number of cofactors. It forms dimeric complexes. The D1/D2 heterodimer binds P680, chlorophylls that are the primary electron donor of PSII, and subsequent electron acceptors. It shares a non-heme iron and each subunit binds pheophytin, quinone, additional chlorophylls, carotenoids and lipids. There is also a Cl(-1) ion associated with D1 and D2, which is required for oxygen evolution. The PSII complex binds additional chlorophylls, carotenoids and specific lipids. serves as cofactor.

It localises to the plastid. It is found in the chloroplast thylakoid membrane. The catalysed reaction is 2 a plastoquinone + 4 hnu + 2 H2O = 2 a plastoquinol + O2. Functionally, photosystem II (PSII) is a light-driven water:plastoquinone oxidoreductase that uses light energy to abstract electrons from H(2)O, generating O(2) and a proton gradient subsequently used for ATP formation. It consists of a core antenna complex that captures photons, and an electron transfer chain that converts photonic excitation into a charge separation. The D1/D2 (PsbA/PsbD) reaction center heterodimer binds P680, the primary electron donor of PSII as well as several subsequent electron acceptors. D2 is needed for assembly of a stable PSII complex. In Oenothera argillicola (Appalachian evening primrose), this protein is Photosystem II D2 protein.